Consider the following 188-residue polypeptide: Shikimate kinase (188 aa).

21–26 contributes to the ATP binding site; that stretch reads GAGKTT. T25 contributes to the Mg(2+) binding site. Residues D43, R67, and G90 each contribute to the substrate site. Position 130 (R130) interacts with ATP. R148 is a substrate binding site.

This sequence belongs to the shikimate kinase family. Monomer. The cofactor is Mg(2+).

The protein localises to the cytoplasm. The enzyme catalyses shikimate + ATP = 3-phosphoshikimate + ADP + H(+). It functions in the pathway metabolic intermediate biosynthesis; chorismate biosynthesis; chorismate from D-erythrose 4-phosphate and phosphoenolpyruvate: step 5/7. Catalyzes the specific phosphorylation of the 3-hydroxyl group of shikimic acid using ATP as a cosubstrate. The polypeptide is Shikimate kinase (Geobacillus thermodenitrificans (strain NG80-2)).